Consider the following 428-residue polypeptide: Serine--tRNA ligase (428 aa).

235 to 237 (TAE) serves as a coordination point for L-serine. 266–268 (RSE) contacts ATP. Glutamate 289 contacts L-serine. ATP is bound at residue 353–356 (EISS). Serine 389 contacts L-serine.

The protein belongs to the class-II aminoacyl-tRNA synthetase family. Type-1 seryl-tRNA synthetase subfamily. In terms of assembly, homodimer. The tRNA molecule binds across the dimer.

It localises to the cytoplasm. It carries out the reaction tRNA(Ser) + L-serine + ATP = L-seryl-tRNA(Ser) + AMP + diphosphate + H(+). It catalyses the reaction tRNA(Sec) + L-serine + ATP = L-seryl-tRNA(Sec) + AMP + diphosphate + H(+). Its pathway is aminoacyl-tRNA biosynthesis; selenocysteinyl-tRNA(Sec) biosynthesis; L-seryl-tRNA(Sec) from L-serine and tRNA(Sec): step 1/1. Functionally, catalyzes the attachment of serine to tRNA(Ser). Is also able to aminoacylate tRNA(Sec) with serine, to form the misacylated tRNA L-seryl-tRNA(Sec), which will be further converted into selenocysteinyl-tRNA(Sec). This is Serine--tRNA ligase from Shewanella pealeana (strain ATCC 700345 / ANG-SQ1).